Consider the following 411-residue polypeptide: MTSPIHVNSEIGKLKTVLLKRPGKEVENITPDIMYRLLFDDIPYLPTIQKEHDQFAQTLRDNGVEVLYLENLAAEAIDAGDVKEAFLDKMLNESHIKSPQVQAALKDYLISMATLDMVEKIMAGVRTNEIDIKSKALIDVSADGDYPFYMDPMPNLYFTRDPAASMGDGLTINKMTFEARQRESMFMEVIMQHHPRFANQGAQVWRDRDHIDRMEGGDELILSDKVLAIGISQRTSAQSIEELAKVLFANHSGFEKILAIKIPHNHAMMHLDTVFTMIDYDKFTIHPGIQGAGGMVDTYILEPGNNDEIKITHQTDLEKVLRDALEVPELTLIPCGGGDAVVAPREQWNDGSNTLAIAPGVVVTYDRNYVSNENLRQYGIKVIEVPSSELSRGRGGPRCMSMPLVREDLKK.

The active-site Amidino-cysteine intermediate is the Cys399.

This sequence belongs to the arginine deiminase family.

It is found in the cytoplasm. It carries out the reaction L-arginine + H2O = L-citrulline + NH4(+). It functions in the pathway amino-acid degradation; L-arginine degradation via ADI pathway; carbamoyl phosphate from L-arginine: step 1/2. The polypeptide is Arginine deiminase (Latilactobacillus sakei subsp. sakei (strain 23K) (Lactobacillus sakei subsp. sakei)).